A 544-amino-acid chain; its full sequence is MKPAELKRLYRIVKVQLEYGLDELLPEHHLTRAPLLARKSLFWLRNQHADKALGDRLRLALQELGPVWIKFGQMMSTRRDLFPPYIADPLAMLQDKVAPFDGLQAKQLIEEELGAPLETWFDDFDIKPLASASIAQVHTAKLKSNGRDVVLKVIRPDIRPQIDADIKLMYRVARIVAKALPEARRLKPVEVVREYEKTLLDELDLRREAANAIQLRRNFENSEELYVPEVLTDFCNETVMVSERIYGIQVSDLAGLHANGTNMKLLAERGVSVFFTQVFRDSFFHADMHPGNVFVNPNHPENPQWIGLDCGIVGTLNSEDKRYLAENFLAFFNRDYRRVAQLHVDSGWVPLDTNVDEFEVAIRMVCEPIFAKPLCEISFGHVLLNLFNTARRFNMEVQPQLVLLQKTLLYVEGLGRQLYPQLDLWQTAKPFLEKWMANQVGPQAFLHALKERAPLWFEKMPELPELLYDSLKQGRNLNQRLDNLYQGYRQSKRQQGTGKFLFGVGATLVVCSAIWISNQLEPLAIGSATIGVLCWLLSWRAYRQ.

The Protein kinase domain maps to 123 to 501 (DFDIKPLASA…KRQQGTGKFL (379 aa)). ATP is bound by residues 129 to 137 (LASASIAQV) and K152. D287 functions as the Proton acceptor in the catalytic mechanism. 2 helical membrane-spanning segments follow: residues 496–516 (GTGK…AIWI) and 519–539 (QLEP…LLSW).

It belongs to the ABC1 family. UbiB subfamily.

It localises to the cell inner membrane. Its pathway is cofactor biosynthesis; ubiquinone biosynthesis [regulation]. Its function is as follows. Is probably a protein kinase regulator of UbiI activity which is involved in aerobic coenzyme Q (ubiquinone) biosynthesis. This chain is Probable protein kinase UbiB, found in Vibrio cholerae serotype O1 (strain ATCC 39541 / Classical Ogawa 395 / O395).